The chain runs to 615 residues: Elongation factor 4 (615 aa).

The 187-residue stretch at 14-200 (QQIRNFCIIA…KVAELIPAPT (187 aa)) folds into the tr-type G domain. GTP is bound by residues 26-31 (DHGKST) and 147-150 (NKID).

The protein belongs to the TRAFAC class translation factor GTPase superfamily. Classic translation factor GTPase family. LepA subfamily.

It is found in the cell membrane. It carries out the reaction GTP + H2O = GDP + phosphate + H(+). In terms of biological role, required for accurate and efficient protein synthesis under certain stress conditions. May act as a fidelity factor of the translation reaction, by catalyzing a one-codon backward translocation of tRNAs on improperly translocated ribosomes. Back-translocation proceeds from a post-translocation (POST) complex to a pre-translocation (PRE) complex, thus giving elongation factor G a second chance to translocate the tRNAs correctly. Binds to ribosomes in a GTP-dependent manner. The sequence is that of Elongation factor 4 from Corynebacterium diphtheriae (strain ATCC 700971 / NCTC 13129 / Biotype gravis).